Reading from the N-terminus, the 193-residue chain is Nucleoside triphosphate pyrophosphatase (193 aa).

D70 (proton acceptor) is an active-site residue.

This sequence belongs to the Maf family. The cofactor is a divalent metal cation.

It is found in the cytoplasm. It catalyses the reaction a ribonucleoside 5'-triphosphate + H2O = a ribonucleoside 5'-phosphate + diphosphate + H(+). The catalysed reaction is a 2'-deoxyribonucleoside 5'-triphosphate + H2O = a 2'-deoxyribonucleoside 5'-phosphate + diphosphate + H(+). Nucleoside triphosphate pyrophosphatase. May have a dual role in cell division arrest and in preventing the incorporation of modified nucleotides into cellular nucleic acids. The protein is Nucleoside triphosphate pyrophosphatase of Anaplasma phagocytophilum (strain HZ).